Consider the following 188-residue polypeptide: Phosphatidylinositol N-acetylglucosaminyltransferase subunit H (188 aa).

It belongs to the PIGH family. As to quaternary structure, component of the glycosylphosphatidylinositol-N-acetylglucosaminyltransferase (GPI-GnT) complex composed at least by PIGA, PIGC, PIGH, PIGP, PIGQ, PIGY and DPM2. Interacts with PIGQ.

The protein resides in the cytoplasm. Its pathway is glycolipid biosynthesis; glycosylphosphatidylinositol-anchor biosynthesis. Part of the glycosylphosphatidylinositol-N-acetylglucosaminyltransferase (GPI-GnT) complex that catalyzes the transfer of N-acetylglucosamine from UDP-N-acetylglucosamine to phosphatidylinositol and participates in the first step of GPI biosynthesis. The polypeptide is Phosphatidylinositol N-acetylglucosaminyltransferase subunit H (Homo sapiens (Human)).